The primary structure comprises 275 residues: Small ribosomal subunit protein uS3 (275 aa).

The KH type-2 domain maps to valine 39–arginine 107. The segment at alanine 216 to glutamate 275 is disordered.

It belongs to the universal ribosomal protein uS3 family. As to quaternary structure, part of the 30S ribosomal subunit. Forms a tight complex with proteins S10 and S14.

Functionally, binds the lower part of the 30S subunit head. Binds mRNA in the 70S ribosome, positioning it for translation. This is Small ribosomal subunit protein uS3 from Polynucleobacter asymbioticus (strain DSM 18221 / CIP 109841 / QLW-P1DMWA-1) (Polynucleobacter necessarius subsp. asymbioticus).